Reading from the N-terminus, the 346-residue chain is Tetraacyldisaccharide 4'-kinase (346 aa).

Position 54–61 (54–61) interacts with ATP; that stretch reads TVGGAGKT.

It belongs to the LpxK family.

It catalyses the reaction a lipid A disaccharide + ATP = a lipid IVA + ADP + H(+). The protein operates within glycolipid biosynthesis; lipid IV(A) biosynthesis; lipid IV(A) from (3R)-3-hydroxytetradecanoyl-[acyl-carrier-protein] and UDP-N-acetyl-alpha-D-glucosamine: step 6/6. In terms of biological role, transfers the gamma-phosphate of ATP to the 4'-position of a tetraacyldisaccharide 1-phosphate intermediate (termed DS-1-P) to form tetraacyldisaccharide 1,4'-bis-phosphate (lipid IVA). This is Tetraacyldisaccharide 4'-kinase from Rhizobium etli (strain ATCC 51251 / DSM 11541 / JCM 21823 / NBRC 15573 / CFN 42).